Consider the following 601-residue polypeptide: Bifunctional protein GlmU (601 aa).

The tract at residues M1–R375 is pyrophosphorylase. Residues L10 to G13, K24, Q75, and G81 to T82 contribute to the UDP-N-acetyl-alpha-D-glucosamine site. D165 provides a ligand contact to Mg(2+). Positions 201, 216, 230, and 373 each coordinate UDP-N-acetyl-alpha-D-glucosamine. N373 serves as a coordination point for Mg(2+). The tract at residues V376–Y396 is linker. The N-acetyltransferase stretch occupies residues G397–G601. Positions 478 and 496 each coordinate UDP-N-acetyl-alpha-D-glucosamine. H508 acts as the Proton acceptor in catalysis. UDP-N-acetyl-alpha-D-glucosamine contacts are provided by Y511 and N522. Acetyl-CoA contacts are provided by residues A525, N531–Y532, and A568.

In the N-terminal section; belongs to the N-acetylglucosamine-1-phosphate uridyltransferase family. This sequence in the C-terminal section; belongs to the transferase hexapeptide repeat family. As to quaternary structure, homotrimer. Mg(2+) serves as cofactor.

It localises to the cytoplasm. It carries out the reaction alpha-D-glucosamine 1-phosphate + acetyl-CoA = N-acetyl-alpha-D-glucosamine 1-phosphate + CoA + H(+). The enzyme catalyses N-acetyl-alpha-D-glucosamine 1-phosphate + UTP + H(+) = UDP-N-acetyl-alpha-D-glucosamine + diphosphate. The protein operates within nucleotide-sugar biosynthesis; UDP-N-acetyl-alpha-D-glucosamine biosynthesis; N-acetyl-alpha-D-glucosamine 1-phosphate from alpha-D-glucosamine 6-phosphate (route II): step 2/2. Its pathway is nucleotide-sugar biosynthesis; UDP-N-acetyl-alpha-D-glucosamine biosynthesis; UDP-N-acetyl-alpha-D-glucosamine from N-acetyl-alpha-D-glucosamine 1-phosphate: step 1/1. It participates in bacterial outer membrane biogenesis; LPS lipid A biosynthesis. Its function is as follows. Catalyzes the last two sequential reactions in the de novo biosynthetic pathway for UDP-N-acetylglucosamine (UDP-GlcNAc). The C-terminal domain catalyzes the transfer of acetyl group from acetyl coenzyme A to glucosamine-1-phosphate (GlcN-1-P) to produce N-acetylglucosamine-1-phosphate (GlcNAc-1-P), which is converted into UDP-GlcNAc by the transfer of uridine 5-monophosphate (from uridine 5-triphosphate), a reaction catalyzed by the N-terminal domain. This chain is Bifunctional protein GlmU, found in Tropheryma whipplei (strain TW08/27) (Whipple's bacillus).